A 338-amino-acid polypeptide reads, in one-letter code: MGLKINRPRRGSMGVYPRKRAADIVPRVRTWPEVNLGKPTLLGFAAYKAGMLHAVVVDDRPTSPLYGKEVVKAVTVLDAPPLYVAAVRLYTLDPTNGYKVAVGEAWVSEPPADLRRVLTLPEKFDTEKQLKALEEYRDVAVDVRVLVATQPRLSGIGKKTPEVLEIPVGGVPSIDERINFAISLLGKTVSPKDVFTPGQLVDVIAVTKGKGYQGVVKRFGVTILPRWHKHRKGHRRTGTIGPQAPALMFTQPRPGQMGFHQRTEYNKRILKIGDNGAEITPKSGFPHYGVIKGPYILLQGSVPGARKRLVVLRYPVRPPKKAPPAAEPQVVWVSSQSI.

A compositionally biased stretch (basic residues) spans 228–237; that stretch reads HKHRKGHRRT. A disordered region spans residues 228–255; the sequence is HKHRKGHRRTGTIGPQAPALMFTQPRPG.

The protein belongs to the universal ribosomal protein uL3 family. As to quaternary structure, part of the 50S ribosomal subunit. Forms a cluster with proteins L14 and L24e.

Its function is as follows. One of the primary rRNA binding proteins, it binds directly near the 3'-end of the 23S rRNA, where it nucleates assembly of the 50S subunit. The sequence is that of Large ribosomal subunit protein uL3 from Pyrobaculum calidifontis (strain DSM 21063 / JCM 11548 / VA1).